Here is a 126-residue protein sequence, read N- to C-terminus: Holo-[acyl-carrier-protein] synthase (126 aa).

Residues aspartate 9 and glutamate 58 each coordinate Mg(2+).

The protein belongs to the P-Pant transferase superfamily. AcpS family. The cofactor is Mg(2+).

The protein resides in the cytoplasm. It catalyses the reaction apo-[ACP] + CoA = holo-[ACP] + adenosine 3',5'-bisphosphate + H(+). Its function is as follows. Transfers the 4'-phosphopantetheine moiety from coenzyme A to a Ser of acyl-carrier-protein. The sequence is that of Holo-[acyl-carrier-protein] synthase from Cronobacter sakazakii (strain ATCC BAA-894) (Enterobacter sakazakii).